The primary structure comprises 356 residues: Tyrosine recombinase XerS (356 aa).

Positions 16-121 constitute a Core-binding (CB) domain; sequence LMPWFVLEYY…ALSSLYKYLT (106 aa). In terms of domain architecture, Tyr recombinase spans 169–354; sequence KFLDYVENEY…VNDEQKNALD (186 aa). Residues R210, K234, H306, R309, and H332 contribute to the active site. Y341 functions as the O-(3'-phospho-DNA)-tyrosine intermediate in the catalytic mechanism.

Belongs to the 'phage' integrase family. XerS subfamily.

It localises to the cytoplasm. Its activity is regulated as follows. FtsK is required for recombination. Site-specific tyrosine recombinase, which acts by catalyzing the cutting and rejoining of the recombining DNA molecules. Essential to convert dimers of the bacterial chromosome into monomers to permit their segregation at cell division. This is Tyrosine recombinase XerS from Streptococcus thermophilus (strain CNRZ 1066).